A 321-amino-acid chain; its full sequence is tRNA-dihydrouridine synthase B (321 aa).

FMN is bound by residues 16 to 18 (PMA) and glutamine 70. Cysteine 100 (proton donor) is an active-site residue. Residues lysine 139, 200 to 202 (NGD), and 224 to 225 (GR) each bind FMN.

This sequence belongs to the Dus family. DusB subfamily. Requires FMN as cofactor.

The enzyme catalyses a 5,6-dihydrouridine in tRNA + NAD(+) = a uridine in tRNA + NADH + H(+). It catalyses the reaction a 5,6-dihydrouridine in tRNA + NADP(+) = a uridine in tRNA + NADPH + H(+). Its function is as follows. Catalyzes the synthesis of 5,6-dihydrouridine (D), a modified base found in the D-loop of most tRNAs, via the reduction of the C5-C6 double bond in target uridines. This chain is tRNA-dihydrouridine synthase B, found in Escherichia coli O157:H7.